The chain runs to 177 residues: Probable DNA-directed RNA polymerase subunit delta (177 aa).

In terms of domain architecture, HTH HARE-type spans 14–81 (CSMIEVVHSV…GENRWGLRSW (68 aa)). The segment at 90–177 (EILPQPKPKK…ETEEEEEEEL (88 aa)) is disordered. Acidic residues predominate over residues 106 to 177 (DGFDDYIEED…ETEEEEEEEL (72 aa)).

The protein belongs to the RpoE family. RNAP is composed of a core of 2 alpha, a beta and a beta' subunits. The core is associated with a delta subunit and one of several sigma factors.

Participates in both the initiation and recycling phases of transcription. In the presence of the delta subunit, RNAP displays an increased specificity of transcription, a decreased affinity for nucleic acids, and an increased efficiency of RNA synthesis because of enhanced recycling. This Bacillus cereus (strain B4264) protein is Probable DNA-directed RNA polymerase subunit delta.